A 57-amino-acid chain; its full sequence is DNA gyrase inhibitor YacG (57 aa).

4 residues coordinate Zn(2+): C10, C13, C25, and C29.

This sequence belongs to the DNA gyrase inhibitor YacG family. In terms of assembly, interacts with GyrB. The cofactor is Zn(2+).

In terms of biological role, inhibits all the catalytic activities of DNA gyrase by preventing its interaction with DNA. Acts by binding directly to the C-terminal domain of GyrB, which probably disrupts DNA binding by the gyrase. The sequence is that of DNA gyrase inhibitor YacG from Brucella abortus (strain 2308).